Here is a 406-residue protein sequence, read N- to C-terminus: Eukaryotic initiation factor 4A-I (406 aa).

Residues 1–21 (MSASQDSRSRDNGPDGMEPEG) are disordered. An N-acetylserine modification is found at Ser2. Residue Ser4 is modified to Phosphoserine. Residues 32-60 (DSFDDMNLSESLLRGIYAYGFEKPSAIQQ) carry the Q motif motif. The Helicase ATP-binding domain maps to 63 to 234 (ILPCIKGYDV…KKFMRDPIRI (172 aa)). Residue 76 to 83 (AQSGTGKT) coordinates ATP. Residue Lys118 is modified to N6-acetyllysine. Lys146 participates in a covalent cross-link: Glycyl lysine isopeptide (Lys-Gly) (interchain with G-Cter in SUMO2). A Phosphothreonine modification is found at Thr158. Residue Lys174 is modified to N6-acetyllysine. A DEAD box motif is present at residues 182–185 (DEAD). Lys193 is subject to N6-acetyllysine. A Glycyl lysine isopeptide (Lys-Gly) (interchain with G-Cter in SUMO2) cross-link involves residue Lys225. Lys238 carries the post-translational modification N6-acetyllysine; alternate. Lys238 participates in a covalent cross-link: Glycyl lysine isopeptide (Lys-Gly) (interchain with G-Cter in SUMO2); alternate. One can recognise a Helicase C-terminal domain in the interval 245-406 (GIRQFYINVE…EMPLNVADLI (162 aa)). Glycyl lysine isopeptide (Lys-Gly) (interchain with G-Cter in SUMO2) cross-links involve residues Lys309, Lys369, and Lys381.

It belongs to the DEAD box helicase family. eIF4A subfamily. In terms of assembly, eIF4F is a multi-subunit complex, the composition of which varies with external and internal environmental conditions. It is composed of at least EIF4A, EIF4E and EIF4G1/EIF4G3. Interacts with PAIP1, EIF4E and UPF2. Found in a complex with XPO7, EIF4A1, ARHGAP1, VPS26A, VPS29, VPS35 and SFN. May interact with NOM1. Interacts with PDCD4; this interferes with the interaction between EIF4A and EIF4G. Interacts with RBM4. Interacts with DDX3X in an RNA-independent manner. Interacts with PKP1 (via N-terminus); the interaction promotes EIF4A1 recruitment to the cap-dependent translation complex and EIF4A1 ATPase activity.

It is found in the cytoplasm. The protein resides in the perinuclear region. Its subcellular location is the cell membrane. It localises to the stress granule. The enzyme catalyses ATP + H2O = ADP + phosphate + H(+). ATP-dependent RNA helicase which is a subunit of the eIF4F complex involved in cap recognition and is required for mRNA binding to ribosome. In the current model of translation initiation, eIF4A unwinds RNA secondary structures in the 5'-UTR of mRNAs which is necessary to allow efficient binding of the small ribosomal subunit, and subsequent scanning for the initiator codon. As a result, promotes cell proliferation and growth. The protein is Eukaryotic initiation factor 4A-I (EIF4A1) of Macaca fascicularis (Crab-eating macaque).